Reading from the N-terminus, the 306-residue chain is Pantothenate kinase (306 aa).

91–98 (GSVAVGKS) contributes to the ATP binding site.

Belongs to the prokaryotic pantothenate kinase family.

The protein resides in the cytoplasm. It catalyses the reaction (R)-pantothenate + ATP = (R)-4'-phosphopantothenate + ADP + H(+). Its pathway is cofactor biosynthesis; coenzyme A biosynthesis; CoA from (R)-pantothenate: step 1/5. This Streptococcus pneumoniae serotype 19F (strain G54) protein is Pantothenate kinase.